The chain runs to 893 residues: Protein kintoun (893 aa).

5 disordered regions span residues 211 to 243 (KNAT…VLPM), 372 to 395 (LSRE…EEAG), 587 to 719 (EQVH…SIDD), 781 to 821 (QRKK…QQTA), and 834 to 893 (PQNN…DEDM). The span at 214-232 (TAEEREPHPLEHTYPKKPE) shows a compositional bias: basic and acidic residues. Phosphoserine is present on serine 377. Positions 594–603 (QQEEEEEEEQ) are enriched in acidic residues. The segment covering 609 to 626 (HQHKKGNKKQRKRNKKQR) has biased composition (basic residues). Residues 640–651 (QQQQHQKQQQQQ) show a composition bias toward low complexity. Polar residues-rich tracts occupy residues 656 to 667 (ENSSPESLNAGS) and 684 to 694 (FSECNDSSSVQ). Positions 709–719 (SISESSSSIDD) are enriched in low complexity. Residues 781–797 (QRKKNQKRRDCKLRAQQ) show a composition bias toward basic residues. Serine 801 carries the phosphoserine modification. Residues 836 to 848 (NNNNRSYSKNNKN) show a composition bias toward low complexity. A compositionally biased stretch (basic and acidic residues) spans 865–877 (NNEEDTKRNEADA). The span at 884 to 893 (EMDDDDDEDM) shows a compositional bias: acidic residues.

This sequence belongs to the PIH1 family. Kintoun subfamily. As to quaternary structure, interacts with Pp1alpha-96A, Pp1-87B, Pp1-13C and flw.

Its subcellular location is the cytoplasm. In terms of biological role, required for cytoplasmic pre-assembly of axonemal dyneins, thereby playing a central role in motility in cilia and flagella. Involved in pre-assembly of dynein arm complexes in the cytoplasm before intraflagellar transport loads them for the ciliary compartment. This Drosophila grimshawi (Hawaiian fruit fly) protein is Protein kintoun.